We begin with the raw amino-acid sequence, 141 residues long: Hemoglobin subunit alpha (141 aa).

The region spanning 1–141 is the Globin domain; sequence VLSGDDKSNL…VSTVLTSKYR (141 aa). Ser-3 carries the phosphoserine modification. Lys-7 and Lys-11 each carry N6-succinyllysine. Lys-16 is subject to N6-acetyllysine; alternate. Lys-16 is subject to N6-succinyllysine; alternate. At Tyr-24 the chain carries Phosphotyrosine. An N6-succinyllysine modification is found at Lys-40. At Ser-49 the chain carries Phosphoserine. His-58 contacts O2. Position 87 (His-87) interacts with heme b. At Ser-102 the chain carries Phosphoserine. Thr-108 bears the Phosphothreonine mark. Ser-124 and Ser-131 each carry phosphoserine. Phosphothreonine occurs at positions 134 and 137. At Ser-138 the chain carries Phosphoserine.

The protein belongs to the globin family. Heterotetramer of two alpha chains and two beta chains. In terms of tissue distribution, red blood cells.

Its function is as follows. Involved in oxygen transport from the lung to the various peripheral tissues. In Microtus pennsylvanicus (Meadow vole), this protein is Hemoglobin subunit alpha.